Here is a 218-residue protein sequence, read N- to C-terminus: Very-long-chain (3R)-3-hydroxyacyl-CoA dehydratase hpo-8 (218 aa).

5 helical membrane passes run 15–35 (ILGWSAILVKTVLGLANGLTW), 44–64 (FELKIFQTAAILEVIHAIVGL), 86–106 (ILHLCSTARFSIGVPLLLVAW), 137–157 (LFYVLYPMGVSGELLTLFASL), and 176–196 (MGISFWWVLIIAALSYIPGFP). Catalysis depends on residues Tyr142 and Glu149.

This sequence belongs to the very long-chain fatty acids dehydratase HACD family.

Its subcellular location is the membrane. The enzyme catalyses a very-long-chain (3R)-3-hydroxyacyl-CoA = a very-long-chain (2E)-enoyl-CoA + H2O. It functions in the pathway lipid metabolism; fatty acid biosynthesis. Its function is as follows. Catalyzes the third of the four reactions of the long-chain fatty acids elongation cycle. This endoplasmic reticulum-bound enzymatic process, allows the addition of two carbons to the chain of long- and very long-chain fatty acids/VLCFAs per cycle. This enzyme catalyzes the dehydration of the 3-hydroxyacyl-CoA intermediate into trans-2,3-enoyl-CoA, within each cycle of fatty acid elongation. Thereby, it participates in the production of VLCFAs of different chain lengths that are involved in multiple biological processes as precursors of membrane lipids and lipid mediators. The protein is Very-long-chain (3R)-3-hydroxyacyl-CoA dehydratase hpo-8 (hpo-8) of Caenorhabditis elegans.